A 435-amino-acid chain; its full sequence is Glutamate-1-semialdehyde 2,1-aminomutase (435 aa).

Lys-269 carries the post-translational modification N6-(pyridoxal phosphate)lysine.

Belongs to the class-III pyridoxal-phosphate-dependent aminotransferase family. HemL subfamily. In terms of assembly, homodimer. It depends on pyridoxal 5'-phosphate as a cofactor.

The protein localises to the cytoplasm. It catalyses the reaction (S)-4-amino-5-oxopentanoate = 5-aminolevulinate. It participates in porphyrin-containing compound metabolism; protoporphyrin-IX biosynthesis; 5-aminolevulinate from L-glutamyl-tRNA(Glu): step 2/2. This Gemmatimonas aurantiaca (strain DSM 14586 / JCM 11422 / NBRC 100505 / T-27) protein is Glutamate-1-semialdehyde 2,1-aminomutase.